Consider the following 131-residue polypeptide: Small ribosomal subunit protein uS8 (131 aa).

This sequence belongs to the universal ribosomal protein uS8 family. Part of the 30S ribosomal subunit. Contacts proteins S5 and S12.

One of the primary rRNA binding proteins, it binds directly to 16S rRNA central domain where it helps coordinate assembly of the platform of the 30S subunit. The polypeptide is Small ribosomal subunit protein uS8 (Methylobacillus flagellatus (strain ATCC 51484 / DSM 6875 / VKM B-1610 / KT)).